Here is a 347-residue protein sequence, read N- to C-terminus: Biotin synthase (347 aa).

Residues 40–258 form the Radical SAM core domain; the sequence is AQVQVSTLLS…IAVARIAMPR (219 aa). [4Fe-4S] cluster is bound by residues Cys55, Cys59, and Cys62. Cys99, Cys130, Cys190, and Arg262 together coordinate [2Fe-2S] cluster.

The protein belongs to the radical SAM superfamily. Biotin synthase family. Homodimer. [4Fe-4S] cluster is required as a cofactor. The cofactor is [2Fe-2S] cluster.

The enzyme catalyses (4R,5S)-dethiobiotin + (sulfur carrier)-SH + 2 reduced [2Fe-2S]-[ferredoxin] + 2 S-adenosyl-L-methionine = (sulfur carrier)-H + biotin + 2 5'-deoxyadenosine + 2 L-methionine + 2 oxidized [2Fe-2S]-[ferredoxin]. It participates in cofactor biosynthesis; biotin biosynthesis; biotin from 7,8-diaminononanoate: step 2/2. Functionally, catalyzes the conversion of dethiobiotin (DTB) to biotin by the insertion of a sulfur atom into dethiobiotin via a radical-based mechanism. The polypeptide is Biotin synthase (Stenotrophomonas maltophilia (strain K279a)).